A 345-amino-acid chain; its full sequence is Uroporphyrinogen decarboxylase (345 aa).

Residues 28–32 (RQAGR), Asp77, Tyr152, Ser207, and His321 contribute to the substrate site.

The protein belongs to the uroporphyrinogen decarboxylase family. Homodimer.

It is found in the cytoplasm. The enzyme catalyses uroporphyrinogen III + 4 H(+) = coproporphyrinogen III + 4 CO2. It functions in the pathway porphyrin-containing compound metabolism; protoporphyrin-IX biosynthesis; coproporphyrinogen-III from 5-aminolevulinate: step 4/4. In terms of biological role, catalyzes the decarboxylation of four acetate groups of uroporphyrinogen-III to yield coproporphyrinogen-III. The protein is Uroporphyrinogen decarboxylase of Arthrobacter sp. (strain FB24).